A 314-amino-acid chain; its full sequence is UDP-3-O-acyl-N-acetylglucosamine deacetylase (314 aa).

Histidine 82, histidine 239, and aspartate 243 together coordinate Zn(2+). Histidine 266 acts as the Proton donor in catalysis.

The protein belongs to the LpxC family. It depends on Zn(2+) as a cofactor.

The enzyme catalyses a UDP-3-O-[(3R)-3-hydroxyacyl]-N-acetyl-alpha-D-glucosamine + H2O = a UDP-3-O-[(3R)-3-hydroxyacyl]-alpha-D-glucosamine + acetate. Its pathway is glycolipid biosynthesis; lipid IV(A) biosynthesis; lipid IV(A) from (3R)-3-hydroxytetradecanoyl-[acyl-carrier-protein] and UDP-N-acetyl-alpha-D-glucosamine: step 2/6. Its function is as follows. Catalyzes the hydrolysis of UDP-3-O-myristoyl-N-acetylglucosamine to form UDP-3-O-myristoylglucosamine and acetate, the committed step in lipid A biosynthesis. The sequence is that of UDP-3-O-acyl-N-acetylglucosamine deacetylase from Myxococcus xanthus (strain DK1622).